The primary structure comprises 361 residues: Single-stranded DNA-binding protein 3 (361 aa).

Met-1 bears the N-acetylmethionine mark. The LisH domain maps to 16–48; sequence AREKLALYVYEYLLHVGAQKSAQTFLSEIRWEK. Asymmetric dimethylarginine occurs at positions 128, 134, and 138. 2 disordered regions span residues 140-166 and 184-361; these read GNQP…QQGH and PMGP…TMSV. Residues 223–241 show a composition bias toward low complexity; that stretch reads PNSANSIPYSSSSPGTYVG. A compositionally biased stretch (pro residues) spans 245 to 255; that stretch reads GGGPPGTPIMP. The span at 258–269 shows a compositional bias: polar residues; sequence ADSTNSSDNIYT. Over residues 288–298 the composition is skewed to gly residues; the sequence is GSDGPMGGMGG. The segment covering 319–330 has biased composition (low complexity); sequence NSPNNISGISNP. 3 positions are modified to phosphoserine: Ser-320, Ser-325, and Ser-328. Thr-333 is subject to Phosphothreonine. Polar residues predominate over residues 346-361; it reads HSFQNDNYSPSMTMSV. A phosphoserine mark is found at Ser-354 and Ser-360.

Its subcellular location is the nucleus. In terms of biological role, may be involved in transcription regulation of the alpha 2(I) collagen gene where it binds to the single-stranded polypyrimidine sequences in the promoter region. The protein is Single-stranded DNA-binding protein 3 (Ssbp3) of Rattus norvegicus (Rat).